The chain runs to 391 residues: Probable chaperonin-like protein PrmG (391 aa).

The tract at residues 153 to 191 (TTRWSVRSSPPPSNTSARTASSPPRRATHSGCRSRSSTA) is disordered. A compositionally biased stretch (polar residues) spans 154–174 (TRWSVRSSPPPSNTSARTASS).

This sequence belongs to the chaperonin (HSP60) family.

In terms of biological role, probably plays an essential role in the productive folding of PrmA and PrmC, and thus in the formation of the active PrmABCD complex. This Gordonia sp. (strain TY-5) protein is Probable chaperonin-like protein PrmG.